The primary structure comprises 138 residues: Lutropin subunit beta (138 aa).

The first 17 residues, 1–17 (LQGLLLWLLLSVGGVWA), serve as a signal peptide directing secretion. 6 disulfides stabilise this stretch: Cys26–Cys74, Cys40–Cys89, Cys43–Cys127, Cys51–Cys105, Cys55–Cys107, and Cys110–Cys117. An N-linked (GlcNAc...) asparagine glycan is attached at Asn30.

This sequence belongs to the glycoprotein hormones subunit beta family. As to quaternary structure, heterodimer of a common alpha chain and a unique beta chain which confers biological specificity to thyrotropin, lutropin, follitropin and gonadotropin.

It localises to the secreted. Functionally, promotes spermatogenesis and ovulation by stimulating the testes and ovaries to synthesize steroids. This chain is Lutropin subunit beta (LHB), found in Canis lupus familiaris (Dog).